Reading from the N-terminus, the 100-residue chain is Urease subunit gamma (100 aa).

It belongs to the urease gamma subunit family. Heterotrimer of UreA (gamma), UreB (beta) and UreC (alpha) subunits. Three heterotrimers associate to form the active enzyme.

It is found in the cytoplasm. The enzyme catalyses urea + 2 H2O + H(+) = hydrogencarbonate + 2 NH4(+). It functions in the pathway nitrogen metabolism; urea degradation; CO(2) and NH(3) from urea (urease route): step 1/1. In Haemophilus influenzae (strain 86-028NP), this protein is Urease subunit gamma.